Reading from the N-terminus, the 272-residue chain is Alcohol dehydrogenase-related 31 kDa protein (272 aa).

Residue 11-34 coordinates NAD(+); sequence YVADCGGIALETSKVLMTKNIAKL. Residue S139 participates in substrate binding. The active-site Proton acceptor is Y152.

This sequence belongs to the short-chain dehydrogenases/reductases (SDR) family.

The chain is Alcohol dehydrogenase-related 31 kDa protein (Adhr) from Drosophila teissieri (Fruit fly).